Reading from the N-terminus, the 375-residue chain is MKTQPSEESASPAPVNPGNSGNSGNRRASSTRISFSDQLDGGDSGDSSSNESERLMESDDEGNIQIPVPTGQPRGRMGRRFTLNPLIFAKEEREARRQSLAQLKLSYYPKHMNPEHYDTGLGFCGWFLMGLSWIMVISTFPVSIYFCMKVVQEYERAVIFRLGRLIGGGAKGPGIFFVLPCIESYTKVDLRTVSFSVPPQEILTKDSVTTSVDAVIYYRISNATVSVANVENAHHSTRLLAQTTLRNMLGTRSLSEILSDRETLAASMQTILDEATESWGIKVERVEIKDVRLPIQLQRAMAAEAEATREARAKVIAAEGEQKASRALRDAASVIAQSPAALQLRYLQTLNSVAAEKNSTIIFPLPMELVRHLIN.

A disordered region spans residues methionine 1–glycine 75. Low complexity predominate over residues serine 11–asparagine 50. The chain crosses the membrane as a helical span at residues glycine 120–phenylalanine 140.

This sequence belongs to the band 7/mec-2 family.

The protein localises to the membrane. May be involved in cilia-related function. In Caenorhabditis elegans, this protein is Stomatin-2 (sto-2).